Consider the following 69-residue polypeptide: uncharacterized protein (69 aa).

This is an uncharacterized protein from Saccharomyces cerevisiae (strain ATCC 204508 / S288c) (Baker's yeast).